We begin with the raw amino-acid sequence, 360 residues long: Dehydrogenase mokE (360 aa).

An NADP(+)-binding site is contributed by 50-53 (SDTK). 134–141 (AGISTAGL) provides a ligand contact to substrate. NADP(+) contacts are provided by residues 173-176 (STAT), 196-199 (SPHN), Y214, 261-262 (LN), and T279. Residue 281 to 285 (GPTIF) coordinates substrate. 350–351 (LS) serves as a coordination point for NADP(+).

It belongs to the zinc-containing alcohol dehydrogenase family. Monomer.

Its pathway is polyketide biosynthesis; lovastatin biosynthesis. Dehydrogenase; part of the gene cluster that mediates the biosynthesis of monakolin K, also known as lovastatin, and which acts as a potent competitive inhibitor of HMG-CoA reductase. Monakolin K biosynthesis is performed in two stages. The first stage is catalyzed by the nonaketide synthase mokA, which belongs to type I polyketide synthases and catalyzes the iterative nine-step formation of the polyketide. This PKS stage is completed by the action of dehydrogenase mokE, which catalyzes the NADPH-dependent reduction of the unsaturated tetra-, penta- and heptaketide intermediates that arise during the mokA-mediated biosynthesis of the nonaketide chain and leads to dihydromonacolin L. Covalently bound dihydromonacolin L is released from mokA by the mokD esterase. Conversion of dihydromonacolin L into monacolin L and then monacolin J is subsequently performed with the participation of molecular oxygen and P450 monoogygenase mokC. Finally, mokF performs the conversion of monacoline J to monacoline K through the addition of the side-chain diketide moiety (2R)-2-methylbutanoate produced by the diketide synthase mokB. The chain is Dehydrogenase mokE from Monascus pilosus (Red mold).